A 142-amino-acid chain; its full sequence is MAKENAEFKEYEKLLDQAYEQLPDKIFEAKRFKVPKGYSVIQGNRTIIKNFGDVSRTLNRDPQHVLKYLLRELGTSGNVEGNRAILQGKFTHYVINDRVKEYVDNFVMCHECNRPDTVIIREDRIDMLKCSACGARAPLKSL.

This sequence belongs to the eIF-2-beta/eIF-5 family. As to quaternary structure, heterotrimer composed of an alpha, a beta and a gamma chain.

Its function is as follows. eIF-2 functions in the early steps of protein synthesis by forming a ternary complex with GTP and initiator tRNA. This is Translation initiation factor 2 subunit beta from Methanosphaera stadtmanae (strain ATCC 43021 / DSM 3091 / JCM 11832 / MCB-3).